A 381-amino-acid polypeptide reads, in one-letter code: Guanine nucleotide-binding protein G(olf) subunit alpha (381 aa).

The interval 1-25 (MGCLGNSSKTAEDQGVDEKERREAN) is disordered. The N-palmitoyl glycine moiety is linked to residue Gly2. A lipid anchor (S-palmitoyl cysteine) is attached at Cys3. Basic and acidic residues predominate over residues 10–25 (TAEDQGVDEKERREAN). The 341-residue stretch at 41–381 (ATHRLLLLGA…RMHLKQYELL (341 aa)) folds into the G-alpha domain. The tract at residues 44–57 (RLLLLGAGESGKST) is G1 motif. GTP-binding residues include Glu52, Ser53, Gly54, Lys55, Ser56, and Thr57. Mg(2+) is bound at residue Ser56. Thr178 carries the post-translational modification Phosphothreonine. The segment at 183–191 (DLLRCRVLT) is G2 motif. GTP is bound by residues Leu185, Arg186, and Thr191. Mg(2+) is bound by residues Thr191 and Asp210. A G3 motif region spans residues 206–215 (FHMFDVGGQR). Residues Gly213, Asn279, Lys280, Asp282, and Ala353 each contribute to the GTP site. A G4 motif region spans residues 275–282 (ILFLNKQD). Residues 351–356 (TCAVDT) are G5 motif.

This sequence belongs to the G-alpha family. G(s) subfamily. As to quaternary structure, g proteins are composed of 3 units; alpha, beta and gamma. The alpha chain contains the guanine nucleotide binding site. Interacts with GAS2L2. Interacts (GDP-bound form) with RIC8B (via C-terminus); promoting GNAL folding and association with the plasma membrane.

Its subcellular location is the cell membrane. It catalyses the reaction GTP + H2O = GDP + phosphate + H(+). In terms of biological role, guanine nucleotide-binding protein (G protein) involved as transducer in olfactory signal transduction controlled by G protein-coupled receptors (GPCRs). Contains the guanine nucleotide binding site and alternates between an active, GTP-bound state and an inactive, GDP-bound state. Signaling by an activated GPCR promotes GDP release and GTP binding. The alpha subunit has a low GTPase activity that converts bound GTP to GDP, thereby terminating the signal. Both GDP release and GTP hydrolysis are modulated by numerous regulatory proteins. GNAL/G(olf) alpha specifically mediates olfactory signal transduction within the olfactory neuroepithelium and the basal ganglia following GPCRs activation. Acts by promoting the specific activation of adenylyl cyclase ADCY3, resulting in increased levels of the signaling molecule cAMP. In Rattus norvegicus (Rat), this protein is Guanine nucleotide-binding protein G(olf) subunit alpha.